The following is a 257-amino-acid chain: Small ribosomal subunit protein eS1 (257 aa).

The tract at residues Gly-237–Val-257 is disordered. The segment covering Asp-239 to Asp-248 has biased composition (basic and acidic residues).

This sequence belongs to the eukaryotic ribosomal protein eS1 family. In terms of assembly, component of the small ribosomal subunit. Mature ribosomes consist of a small (40S) and a large (60S) subunit. The 40S subunit contains about 33 different proteins and 1 molecule of RNA (18S). The 60S subunit contains about 49 different proteins and 3 molecules of RNA (28S, 5.8S and 5S).

The protein localises to the cytoplasm. In Caenorhabditis elegans, this protein is Small ribosomal subunit protein eS1.